Reading from the N-terminus, the 381-residue chain is tRNA-cytidine(32) 2-sulfurtransferase (381 aa).

The short motif at 101–106 is the PP-loop motif element; sequence SGGKDS. Positions 176, 179, and 267 each coordinate [4Fe-4S] cluster.

This sequence belongs to the TtcA family. Homodimer. Mg(2+) serves as cofactor. The cofactor is [4Fe-4S] cluster.

The protein resides in the cytoplasm. It catalyses the reaction cytidine(32) in tRNA + S-sulfanyl-L-cysteinyl-[cysteine desulfurase] + AH2 + ATP = 2-thiocytidine(32) in tRNA + L-cysteinyl-[cysteine desulfurase] + A + AMP + diphosphate + H(+). It participates in tRNA modification. Functionally, catalyzes the ATP-dependent 2-thiolation of cytidine in position 32 of tRNA, to form 2-thiocytidine (s(2)C32). The sulfur atoms are provided by the cysteine/cysteine desulfurase (IscS) system. The chain is tRNA-cytidine(32) 2-sulfurtransferase from Psychrobacter arcticus (strain DSM 17307 / VKM B-2377 / 273-4).